We begin with the raw amino-acid sequence, 122 residues long: Large ribosomal subunit protein uL14c (122 aa).

Belongs to the universal ribosomal protein uL14 family. In terms of assembly, part of the 50S ribosomal subunit.

The protein localises to the plastid. Its subcellular location is the chloroplast. Functionally, binds to 23S rRNA. The polypeptide is Large ribosomal subunit protein uL14c (Stigeoclonium helveticum (Green alga)).